A 666-amino-acid polypeptide reads, in one-letter code: E3 ubiquitin-protein ligase MBR2 (666 aa).

4 stretches are compositionally biased toward polar residues: residues 1 to 14 (MQGP…STGI), 23 to 35 (CSTN…NNIL), 42 to 58 (FPNN…ASSS), and 73 to 88 (SSSR…SNGS). Disordered stretches follow at residues 1–58 (MQGP…ASSS), 73–95 (SSSR…RQLL), 155–179 (SLGS…GLGS), 221–329 (SSLS…DGQP), 400–433 (NPST…TPHN), and 457–491 (GASL…RQRR). The span at 221 to 239 (SSLSLSMPSQNSPNVNNQS) shows a compositional bias: low complexity. 3 stretches are compositionally biased toward polar residues: residues 258-268 (AFPSTRSTETI), 286-303 (FSFT…QLPA), and 414-433 (GSSS…TPHN). Residues 619 to 660 (CCVCQEEYAEGDDLGTLGCGHEFHTACVKQWLMLKNLCPICK) form an RING-type; atypical zinc finger.

It belongs to the RING-type zinc finger family. In terms of assembly, interacts with MED25 and UBC11.

It catalyses the reaction S-ubiquitinyl-[E2 ubiquitin-conjugating enzyme]-L-cysteine + [acceptor protein]-L-lysine = [E2 ubiquitin-conjugating enzyme]-L-cysteine + N(6)-ubiquitinyl-[acceptor protein]-L-lysine.. It participates in protein modification; protein ubiquitination. E3 ubiquitin-protein ligase that functions as a regulator of MED25 stability by targeting MED25 for degradation in a RING-H2-dependent way. Proteasome-dependent degradation of MED25 seems to activate its function as positive regulator of FLOWERING LOCUS T (FT) and is important to induce the expression of FT and consequently to promote flowering. May function downstream of HAL3 and be required for HAL3-regulated plant growth. Activation of MBR2 by HAL3 may lead to the degradation of cell cycle suppressors, resulting in enhancement of cell division and plant growth. The chain is E3 ubiquitin-protein ligase MBR2 (MBR2) from Arabidopsis thaliana (Mouse-ear cress).